Here is a 127-residue protein sequence, read N- to C-terminus: Calcium-binding protein PBP1 (127 aa).

Residues 1–18 are compositionally biased toward polar residues; sequence MASPKSSTRPNQENQEPQ. Residues 1 to 20 are disordered; sequence MASPKSSTRPNQENQEPQFQ. In terms of domain architecture, EF-hand spans 72-107; the sequence is LTDDDVRYMINEGDFDRDGALNQMEFCVLMFRLSPE. Ca(2+) contacts are provided by Asp85, Asp87, Asp89, and Glu96.

Interacts with PID.

Functionally, potential calcium sensor that binds calcium in vitro. The protein is Calcium-binding protein PBP1 (PBP1) of Arabidopsis thaliana (Mouse-ear cress).